A 488-amino-acid polypeptide reads, in one-letter code: MADVRKLKNYIDGEWVESKTDKYEDVINPATGEVLCQVPISTRAELDQAAVIAEQAFEKWSQVAVPRRARVLFGFQQLLIQHKEELARLITLENGKNLSEARGEVQRGIENVEFAAGAPTLMMGDSLASIATDVEAANYRYPVGVVGGIAPFNFPMMVPCWMFPMAIALGNSFILKPSERTPLLMEKLVELFSEAGLPKGVFNVVYGAHDVVNGILENEIIKAVSFVGSKPVGEYVYKTGSANLKRVQALTGAKNHTIVLNDADLEDTVTNVISAAFGSAGERCMACAVVTVEEGIADEFLEALRTAAQNVKIGNGLDDGVFLGPVIREENQKRTIAYIEKGIEEGAKLTVDGRETGLSEGHFVGPTILEDVTTDMTIWKDEIFAPVLSVIRVKNLQEAVRVANQSEFANGACIFTNNAKAIRYFREKIDAGMLGVNLGVPAPMAFFPFSGWKSSFYGTLHANGKDSVDFYTHKKVVTARYSLKGYEE.

The NAD(+) site is built by alanine 150, phenylalanine 152, lysine 176, glutamate 179, arginine 180, serine 229, and threonine 251. Catalysis depends on cysteine 284, which acts as the Nucleophile. Glutamate 382 is a binding site for NAD(+).

The protein belongs to the aldehyde dehydrogenase family. IolA subfamily. In terms of assembly, homotetramer.

It carries out the reaction 3-oxopropanoate + NAD(+) + CoA + H2O = hydrogencarbonate + acetyl-CoA + NADH + H(+). The catalysed reaction is 2-methyl-3-oxopropanoate + NAD(+) + CoA + H2O = propanoyl-CoA + hydrogencarbonate + NADH + H(+). The protein operates within polyol metabolism; myo-inositol degradation into acetyl-CoA; acetyl-CoA from myo-inositol: step 7/7. Catalyzes the oxidation of malonate semialdehyde (MSA) and methylmalonate semialdehyde (MMSA) into acetyl-CoA and propanoyl-CoA, respectively. Is involved in a myo-inositol catabolic pathway. Bicarbonate, and not CO2, is the end-product of the enzymatic reaction. In Listeria monocytogenes serovar 1/2a (strain ATCC BAA-679 / EGD-e), this protein is Malonate-semialdehyde dehydrogenase.